A 7079-amino-acid polypeptide reads, in one-letter code: Replicase polyprotein 1ab (7079 aa).

Residues 12 to 127 (THVQLSLPVL…YRNVLLRKNG (116 aa)) form the CoV Nsp1 globular domain. Positions 148-179 (ELGTDPIEDYEQNWNTKHGGGVLRELIRELNG) constitute a BetaCoV Nsp1 C-terminal domain. In terms of domain architecture, CoV Nsp2 N-terminal spans 183-456 (TRYVDNNFCG…NEDLMEILNR (274 aa)). Positions 200, 231, 234, 236, 323, 326, 341, 344, 370, 373, 382, and 416 each coordinate Zn(2+). Positions 200-236 (CIKDLLARAGKSMCTLSEQLDYIESKRGVYCCREHEH) are C2H2. A C4 region spans residues 323 to 344 (CNHCDEVSWQTCDFLKATCEQC). Residues 370–416 (CPACQDPEVGPEHSVADYHNHSNIETRLRKGGRTKCFGGCVFAYVGC) are C2HC. The CoV Nsp2 middle domain occupies 458-688 (RVNINIVGDF…LDVLNKALEM (231 aa)). Positions 690 to 818 (IDQVIIAGAK…TNNVFSLKGG (129 aa)) constitute a CoV Nsp2 C-terminal domain. The 109-residue stretch at 822–930 (KGVTFGEDTV…MYCSFYPPDE (109 aa)) folds into the Ubiquitin-like 1 domain. Macro domains follow at residues 1001-1167 (VNQF…LGYL), 1213-1341 (KFKA…LPSK), and 1349-1476 (ILGT…TSSS). Positions 1478 to 1544 (TSEEHFIETV…LLDKLKSLLS (67 aa)) constitute a DPUP domain. The 56-residue stretch at 1548–1603 (VRTIKVFTTVDNTNLHTQIVDMSMTYGQQFGPTYLDGADVTKIKPHAKHEGKTFFV) folds into the Ubiquitin-like 2 domain. The region spanning 1617–1881 (YYHTLDESFL…YTEIQPKLDE (265 aa)) is the Peptidase C16 domain. Residue cysteine 1657 is the For PL-PRO activity of the active site. 4 residues coordinate Zn(2+): cysteine 1735, cysteine 1738, cysteine 1770, and cysteine 1772. The C4-type zinc-finger motif lies at 1735–1772 (CKTCGQKSTTLTGVEAVMYMGTLSYEELKTGVTIPCIC). Catalysis depends on for PL-PRO activity residues histidine 1818 and aspartate 1832. Residues 1894 to 2004 (PIDLVPTQPL…CLWSTKPVET (111 aa)) form the Nucleic acid-binding domain. The region spanning 2029–2138 (PTSEEVVENP…LGQAAVTTTN (110 aa)) is the G2M domain. The tract at residues 2098–2377 (LALGLRTLAT…IFFAFCYYVW (280 aa)) is HD1. Residues 2209-2229 (LFTIAMWLLLLSICLGSLIYV) form a helical membrane-spanning segment. Residues 2230 to 2300 (TAAFGVLLSN…QVTISSYKLD (71 aa)) form the 3Ecto domain. Intrachain disulfides connect cysteine 2246-cysteine 2274 and cysteine 2265-cysteine 2271. A run of 2 helical transmembrane segments spans residues 2310–2330 (WFLAYMLFTKFFYLLGLSAIM) and 2357–2377 (MAPVSAMVRMYIFFAFCYYVW). The Y1 stretch occupies residues 2378–2468 (KSYVHIMDGC…QFKRPINPTD (91 aa)). In terms of domain architecture, CoV Nsp3 Y spans 2378–2746 (KSYVHIMDGC…ITTKISLKGG (369 aa)). Zn(2+) is bound by residues histidine 2382, cysteine 2387, cysteine 2392, cysteine 2395, cysteine 2428, histidine 2431, cysteine 2435, and cysteine 2438. The segment at 2382 to 2395 (HIMDGCTSSTCMMC) is ZF1. Residues 2428–2438 (CKAHNWNCLNC) form a ZF2 region. The Y2 stretch occupies residues 2469 to 2563 (QSSYVVDSVA…LLDQALVSDV (95 aa)). A coV-Y region spans residues 2469-2746 (QSSYVVDSVA…ITTKISLKGG (278 aa)). The Y3 stretch occupies residues 2564-2645 (GDSTEVSVKM…ECLKLSHHSD (82 aa)). The Y4 stretch occupies residues 2646-2746 (LEVTGDSCNN…ITTKISLKGG (101 aa)). The next 7 membrane-spanning stretches (helical) occupy residues 2761–2781 (LLCVLAALFCYIIMPVHSLSV), 2998–3018 (PGVFCGVDAMNLIANIFTPLV), 3028–3048 (ASVVAGGIIAILVTCAAYYFM), 3060–3080 (VVAANALLFLMSFTILCLAPA), 3083–3103 (FLPGVYSIFYLYLTFYFTNDV), 3111–3131 (WFAMFSPIVPFWITAIYVFCI), and 3148–3168 (VMFNGVTFSTFEEAALCTFLL). The tract at residues 2761–3168 (LLCVLAALFC…EEAALCTFLL (408 aa)) is HD2. The region spanning 3148–3246 (VMFNGVTFST…QTSITSAVLQ (99 aa)) is the Nsp4C domain. The Peptidase C30 domain occupies 3247–3552 (SGFRKMAFPS…VRQCSGVTFQ (306 aa)). Catalysis depends on for 3CL-PRO activity residues histidine 3287 and cysteine 3391. A run of 7 helical transmembrane segments spans residues 3570–3590 (FLTSLLILVQSTQWSLFFFVY), 3592–3612 (NAFLPFTLGIMAIAACAMLLV), 3618–3638 (FLCLFLLPSLATVAYFNMVYM), 3665–3684 (CVMYASALVLLVLMTARTVY), 3691–3710 (VWTLMNVITLVYKVYYGNSL), 3734–3754 (IMFLARAIVFVCVEYYPLLFI), and 3762–3782 (IMLVYCFLGYCCCCYFGLFCL). Residues 3570–3782 (FLTSLLILVQ…CCCYFGLFCL (213 aa)) are HD3. The RdRp Nsp7 cofactor domain occupies 3843–3925 (SKMSDVKCTS…EMLDNRATLQ (83 aa)). The RdRp Nsp8 cofactor domain maps to 3926–4123 (AIASEFSSLP…LRANSAVKLQ (198 aa)). Residues 4124–4236 (NNELSPVALR…GSLAATVRLQ (113 aa)) enclose the Nsp9 ssRNA-binding domain. The ExoN/MTase coactivator domain occupies 4237–4375 (AGNATEVPAN…CDQLREPMMQ (139 aa)). Residues cysteine 4310, cysteine 4313, histidine 4319, cysteine 4326, cysteine 4353, cysteine 4356, cysteine 4364, and cysteine 4366 each contribute to the Zn(2+) site. Zinc fingers lie at residues 4310–4326 (CLYCRCHIDHPNPKGFC) and 4353–4366 (CTVCGTWKGYGCSC). A NiRAN domain is found at 4382 to 4636 (FLNRVCGVSA…AAESHMDADL (255 aa)). Mn(2+) contacts are provided by asparagine 4584 and aspartate 4593. The region spanning 4641 to 4739 (IKWDLLKYDF…HNQDVNLHSS (99 aa)) is the Nsp12 Interface domain. Histidine 4670, cysteine 4676, cysteine 4681, cysteine 4685, and cysteine 4862 together coordinate Zn(2+). Residues 4740 to 5307 (RLSFKELLVY…AMYTPHTVLQ (568 aa)) enclose the Nsp12 RNA-dependent RNA polymerase domain. Residues 4742-4956 (SFKELLVYAA…HQKLLKSIAA (215 aa)) form a rdRp Fingers N-ter region. A rdRp Palm N-ter region spans residues 4957 to 4995 (TRGATVVIGTSKFYGGWHNMLKTVYSDVETPHLMGWDYP). The 163-residue stretch at 4987–5149 (PHLMGWDYPK…CYNSNYAAQG (163 aa)) folds into the RdRp catalytic domain. The segment at 4996–5054 (KCDRAMPNMLRIMASLVLARKHSTCCNLSHRFYRLANECAQVLSEMVMCGGSLYVKPGG) is rdRp Fingers C-ter. Zn(2+) is bound by residues histidine 5017, cysteine 5020, and cysteine 5021. The rdRp Palm C-ter stretch occupies residues 5055–5190 (TSSGDATTAY…TKGPHEFCSQ (136 aa)). Residues serine 5134, aspartate 5135, and aspartate 5136 contribute to the active site. The interval 5191–5307 (HTMLVKQGDD…AMYTPHTVLQ (117 aa)) is rdRp Thumb. The 113-residue stretch at 5308–5420 (AVGACVLCNS…TDFNAIATCD (113 aa)) folds into the CV ZBD domain. Positions 5312, 5315, 5323, 5326, 5333, 5336, 5340, 5346, 5357, 5362, 5379, and 5382 each coordinate Zn(2+). The (+)RNA virus helicase ATP-binding domain maps to 5564 to 5745 (NISDEFSSNV…MKTIGPDMFL (182 aa)). 5589-5596 (GPPGTGKS) provides a ligand contact to ATP. The region spanning 5746-5915 (GTCRRCPAEI…TLQAENVTGL (170 aa)) is the (+)RNA virus helicase C-terminal domain. The region spanning 5980–6195 (MFITREEAIR…RCLAVHECFV (216 aa)) is the ExoN domain. Catalysis depends on residues aspartate 5998, glutamate 6000, and glutamate 6099. 7 residues coordinate Zn(2+): cysteine 6115, cysteine 6118, cysteine 6134, histidine 6137, histidine 6165, cysteine 6169, and histidine 6172. Catalysis depends on residues histidine 6176 and aspartate 6181. Cysteine 6187 provides a ligand contact to Zn(2+). The 232-residue stretch at 6204–6435 (YPIIGDELKI…NLWNTFTRLQ (232 aa)) folds into the N7-MTase domain. Position 6239 to 6245 (6239 to 6245 (DIGNPKA)) interacts with S-adenosyl-L-methionine. Residues 6322–6336 (CDGGSLYVNKHAFHT) are gpppA-binding. Zn(2+) is bound by residues cysteine 6360, cysteine 6381, cysteine 6392, and histidine 6395. The 61-residue stretch at 6436–6496 (SLENVAYNVV…NVAFELWAKR (61 aa)) folds into the Nsp15 N-terminal oligomerization domain. Positions 6497 to 6622 (NIKPVPEIKI…YFKKVDGIIQ (126 aa)) constitute an AV-Nsp11N/CoV-Nsp15M domain. The NendoU domain maps to 6639 to 6778 (KPRSKMETDF…KDGHVETFYP (140 aa)). Active-site residues include histidine 6669, histidine 6684, lysine 6724, lysine 6827, aspartate 6911, lysine 6951, and glutamate 6984. The Nidovirus-type SAM-dependent 2'-O-MTase domain occupies 6783–7077 (SQAWQPGVAM…RVVVSSDILV (295 aa)).

The protein belongs to the coronaviruses polyprotein 1ab family. As to quaternary structure, interacts with host PHB and PHB2. Interacts with papain-like protease nsp3 and non-structural protein 6. In terms of assembly, monomer. Homodimer. Only the homodimer shows catalytic activity. As to quaternary structure, interacts with nsp8 and nsp12 to form the replication-transcription complex (RTC): nsp12, nsp7, two subunits of nsp8, and up to two subunits of nsp13. Interacts with nsp7, nsp13 and nsp12 to form the replication-transcription complex (RTC): nsp12, nsp7, two subunits of nsp8, and up to two subunits of nsp13. In terms of assembly, interacts with nsp12. As to quaternary structure, interacts with proofreading exoribonuclease nsp14 and 2'-O-methyltransferase nsp16; these interactions enhance nsp14 and nsp16 enzymatic activities. Interacts with nsp7 and nsp8 to form the replication-transcription complex (RTC): nsp12, nsp7, two subunits of nsp8, and up to two subunits of nsp13. Interacts with nsp9. In terms of assembly, interacts with nsp8 to form the replication-transcription complex (RTC): nsp12, nsp7, two subunits of nsp8, and up to two subunits of nsp13. It depends on Mn(2+) as a cofactor. Mg(2+) serves as cofactor. In terms of processing, specific enzymatic cleavages in vivo by its own proteases yield mature proteins. 3CL-PRO and PL-PRO proteinases are autocatalytically processed.

It is found in the host membrane. The protein resides in the host cytoplasm. Its subcellular location is the host perinuclear region. It localises to the host endoplasmic reticulum-Golgi intermediate compartment. The enzyme catalyses RNA(n) + a ribonucleoside 5'-triphosphate = RNA(n+1) + diphosphate. It catalyses the reaction ATP + H2O = ADP + phosphate + H(+). It carries out the reaction Thiol-dependent hydrolysis of ester, thioester, amide, peptide and isopeptide bonds formed by the C-terminal Gly of ubiquitin (a 76-residue protein attached to proteins as an intracellular targeting signal).. The catalysed reaction is a 5'-end (N(7)-methyl 5'-triphosphoguanosine)-ribonucleoside in mRNA + S-adenosyl-L-methionine = a 5'-end (N(7)-methyl 5'-triphosphoguanosine)-(2'-O-methyl-ribonucleoside) in mRNA + S-adenosyl-L-homocysteine + H(+). The enzyme catalyses uridylyl-uridylyl-ribonucleotide-RNA = a 3'-end uridylyl-2',3'-cyclophospho-uridine-RNA + a 5'-end dephospho-ribonucleoside-RNA. It catalyses the reaction a 5'-end diphospho-ribonucleoside in mRNA + GTP + H(+) = a 5'-end (5'-triphosphoguanosine)-ribonucleoside in mRNA + diphosphate. It carries out the reaction a 5'-end (5'-triphosphoguanosine)-ribonucleoside in mRNA + S-adenosyl-L-methionine = a 5'-end (N(7)-methyl 5'-triphosphoguanosine)-ribonucleoside in mRNA + S-adenosyl-L-homocysteine. In terms of biological role, the replicase polyprotein of coronaviruses is a multifunctional protein: it contains the activities necessary for the transcription of negative stranded RNA, leader RNA, subgenomic mRNAs and progeny virion RNA as well as proteinases responsible for the cleavage of the polyprotein into functional products. Functionally, inhibits host translation by interacting with the 40S ribosomal subunit. The nsp1-40S ribosome complex further induces an endonucleolytic cleavage near the 5'UTR of host mRNAs, targeting them for degradation. Viral mRNAs are not susceptible to nsp1-mediated endonucleolytic RNA cleavage thanks to the presence of a 5'-end leader sequence and are therefore protected from degradation. By suppressing host gene expression, nsp1 facilitates efficient viral gene expression in infected cells and evasion from host immune response. Its function is as follows. May play a role in the modulation of host cell survival signaling pathway by interacting with host PHB and PHB2. Indeed, these two proteins play a role in maintaining the functional integrity of the mitochondria and protecting cells from various stresses. Responsible for the cleavages located at the N-terminus of the replicase polyprotein. In addition, PL-PRO possesses a deubiquitinating/deISGylating activity and processes both 'Lys-48'- and 'Lys-63'-linked polyubiquitin chains from cellular substrates. Participates together with nsp4 in the assembly of virally-induced cytoplasmic double-membrane vesicles necessary for viral replication. Antagonizes innate immune induction of type I interferon by blocking the phosphorylation, dimerization and subsequent nuclear translocation of host IRF3. Also prevents host NF-kappa-B signaling. In terms of biological role, participates in the assembly of virally-induced cytoplasmic double-membrane vesicles necessary for viral replication. Functionally, cleaves the C-terminus of replicase polyprotein at 11 sites. Recognizes substrates containing the core sequence [ILMVF]-Q-|-[SGACN]. Also able to bind an ADP-ribose-1''-phosphate (ADRP). Its function is as follows. Plays a role in the initial induction of autophagosomes from host endoplasmic reticulum. Later, limits the expansion of these phagosomes that are no longer able to deliver viral components to lysosomes. Forms a hexadecamer with nsp8 (8 subunits of each) that may participate in viral replication by acting as a primase. Alternatively, may synthesize substantially longer products than oligonucleotide primers. In terms of biological role, forms a hexadecamer with nsp7 (8 subunits of each) that may participate in viral replication by acting as a primase. Alternatively, may synthesize substantially longer products than oligonucleotide primers. Functionally, forms a primer, NSP9-pU, which is utilized by the polymerase for the initiation of RNA chains. Interacts with ribosome signal recognition particle RNA (SRP). Together with NSP8, suppress protein integration into the cell membrane, thereby disrupting host immune defenses. Its function is as follows. Plays a pivotal role in viral transcription by stimulating both nsp14 3'-5' exoribonuclease and nsp16 2'-O-methyltransferase activities. Therefore plays an essential role in viral mRNAs cap methylation. RNA-directed RNA polymerase that catalyzes the transcription of viral genomic and subgenomic RNAs. Acts in complex with nsp7 and nsp8 to transcribe both the minus and positive strands of genomic RNA. The kinase-like NiRAN domain of NSP12 attaches one or more nucleotides to the amino terminus of NSP9, forming a covalent RNA-protein intermediate that serves as transcription/replication primer. Subgenomic RNAs (sgRNAs) are formed by discontinuous transcription: The polymerase has the ability to pause at transcription-regulating sequences (TRS) and jump to the leader TRS, resulting in a major deletion. This creates a series of subgenomic RNAs that are replicated, transcribed and translated. In addition, Nsp12 is a subunit of the viral RNA capping enzyme that catalyzes the RNA guanylyltransferase reaction for genomic and sub-genomic RNAs. Subsequently, the NiRAN domain transfers RNA to GDP, and forms the core cap structure GpppA-RNA. In terms of biological role, multi-functional protein with a zinc-binding domain in N-terminus displaying RNA and DNA duplex-unwinding activities with 5' to 3' polarity. Activity of helicase is dependent on magnesium. Functionally, plays a role in viral RNA synthesis through two distinct activities. The N7-guanine methyltransferase activity plays a role in the formation of the cap structure GpppA-RNA. The proofreading exoribonuclease reduces the sensitivity of the virus to RNA mutagens during replication. This activity acts on both ssRNA and dsRNA in a 3'-5' direction. Its function is as follows. Plays a role in viral transcription/replication and prevents the simultaneous activation of host cell dsRNA sensors, such as MDA5/IFIH1, OAS, and PKR. Acts by degrading the 5'-polyuridines generated during replication of the poly(A) region of viral genomic and subgenomic RNAs. Catalyzes a two-step reaction in which a 2'3'-cyclic phosphate (2'3'-cP) is first generated by 2'-O transesterification, which is then hydrolyzed to a 3'-phosphate (3'-P). If not degraded, poly(U) RNA would hybridize with poly(A) RNA tails and activate host dsRNA sensors. Methyltransferase that mediates mRNA cap 2'-O-ribose methylation to the 5'-cap structure of viral mRNAs. N7-methyl guanosine cap is a prerequisite for binding of nsp16. Therefore plays an essential role in viral mRNAs cap methylation which is essential to evade immune system. In Bat coronavirus 279/2005 (BtCoV), this protein is Replicase polyprotein 1ab (rep).